The sequence spans 283 residues: UPF0276 protein Nmul_A2550 (283 aa).

The protein belongs to the UPF0276 family.

This chain is UPF0276 protein Nmul_A2550, found in Nitrosospira multiformis (strain ATCC 25196 / NCIMB 11849 / C 71).